A 169-amino-acid polypeptide reads, in one-letter code: Cytochrome c-type biogenesis protein CcmE (169 aa).

The Cytoplasmic portion of the chain corresponds to 1 to 7 (MTRKQRR). The chain crosses the membrane as a helical; Signal-anchor for type II membrane protein span at residues 8–28 (MTIIGGSLAVLALAAALVLNA). Topologically, residues 29 to 169 (LRDSIVFFST…AQGNPQGAVR (141 aa)) are periplasmic. Positions 122 and 126 each coordinate heme. Residues 143 to 169 (DDYGGKASDGVKPAATTAQGNPQGAVR) are disordered. Positions 158–169 (TTAQGNPQGAVR) are enriched in polar residues.

It belongs to the CcmE/CycJ family.

The protein localises to the cell inner membrane. In terms of biological role, heme chaperone required for the biogenesis of c-type cytochromes. Transiently binds heme delivered by CcmC and transfers the heme to apo-cytochromes in a process facilitated by CcmF and CcmH. This Bradyrhizobium diazoefficiens (strain JCM 10833 / BCRC 13528 / IAM 13628 / NBRC 14792 / USDA 110) protein is Cytochrome c-type biogenesis protein CcmE.